We begin with the raw amino-acid sequence, 256 residues long: Ubiquinone/menaquinone biosynthesis C-methyltransferase UbiE (256 aa).

Residues 1 to 12 (MTDPRKGDHAEP) are compositionally biased toward basic and acidic residues. The disordered stretch occupies residues 1 to 21 (MTDPRKGDHAEPTTHFGYQDV). S-adenosyl-L-methionine contacts are provided by residues T79, D100, and 128-129 (DA).

It belongs to the class I-like SAM-binding methyltransferase superfamily. MenG/UbiE family.

It catalyses the reaction a 2-demethylmenaquinol + S-adenosyl-L-methionine = a menaquinol + S-adenosyl-L-homocysteine + H(+). It carries out the reaction a 2-methoxy-6-(all-trans-polyprenyl)benzene-1,4-diol + S-adenosyl-L-methionine = a 5-methoxy-2-methyl-3-(all-trans-polyprenyl)benzene-1,4-diol + S-adenosyl-L-homocysteine + H(+). The protein operates within quinol/quinone metabolism; menaquinone biosynthesis; menaquinol from 1,4-dihydroxy-2-naphthoate: step 2/2. It functions in the pathway cofactor biosynthesis; ubiquinone biosynthesis. Functionally, methyltransferase required for the conversion of demethylmenaquinol (DMKH2) to menaquinol (MKH2) and the conversion of 2-polyprenyl-6-methoxy-1,4-benzoquinol (DDMQH2) to 2-polyprenyl-3-methyl-6-methoxy-1,4-benzoquinol (DMQH2). This chain is Ubiquinone/menaquinone biosynthesis C-methyltransferase UbiE, found in Pseudomonas entomophila (strain L48).